The chain runs to 271 residues: Large ribosomal subunit protein uL15c (271 aa).

Disordered regions lie at residues 1–21 (MASL…NNYP) and 66–120 (SNVS…QKSR). The transit peptide at 1-61 (MASLLSLSST…KESTRLVVVA (61 aa)) directs the protein to the chloroplast. Low complexity predominate over residues 66 to 76 (SNVSPSIGSGS). Basic residues predominate over residues 91–101 (SRKKGKRKGRG). Over residues 102-114 (HAAGQGGSCGFGM) the composition is skewed to gly residues.

Component of the chloroplast large ribosomal subunit (LSU). Mature 70S chloroplast ribosomes of higher plants consist of a small (30S) and a large (50S) subunit. The 30S small subunit contains 1 molecule of ribosomal RNA (16S rRNA) and 24 different proteins. The 50S large subunit contains 3 rRNA molecules (23S, 5S and 4.5S rRNA) and 33 different proteins.

The protein localises to the plastid. The protein resides in the chloroplast. In terms of biological role, component of the chloroplast ribosome (chloro-ribosome), a dedicated translation machinery responsible for the synthesis of chloroplast genome-encoded proteins, including proteins of the transcription and translation machinery and components of the photosynthetic apparatus. This chain is Large ribosomal subunit protein uL15c (RPL15), found in Spinacia oleracea (Spinach).